The primary structure comprises 448 residues: tRNA-2-methylthio-N(6)-dimethylallyladenosine synthase (448 aa).

Positions 2–119 constitute an MTTase N-terminal domain; the sequence is KKLYIKTFGC…LSDLIAKRRE (118 aa). Residues cysteine 11, cysteine 48, cysteine 82, cysteine 156, cysteine 160, and cysteine 163 each contribute to the [4Fe-4S] cluster site. In terms of domain architecture, Radical SAM core spans 142-377; sequence RQTRGSAYVS…LVESQANQIS (236 aa). A TRAM domain is found at 378-444; sequence QKMLGNIERV…NYTLRGKLVE (67 aa).

Belongs to the methylthiotransferase family. MiaB subfamily. Monomer. Requires [4Fe-4S] cluster as cofactor.

Its subcellular location is the cytoplasm. It catalyses the reaction N(6)-dimethylallyladenosine(37) in tRNA + (sulfur carrier)-SH + AH2 + 2 S-adenosyl-L-methionine = 2-methylsulfanyl-N(6)-dimethylallyladenosine(37) in tRNA + (sulfur carrier)-H + 5'-deoxyadenosine + L-methionine + A + S-adenosyl-L-homocysteine + 2 H(+). Catalyzes the methylthiolation of N6-(dimethylallyl)adenosine (i(6)A), leading to the formation of 2-methylthio-N6-(dimethylallyl)adenosine (ms(2)i(6)A) at position 37 in tRNAs that read codons beginning with uridine. The polypeptide is tRNA-2-methylthio-N(6)-dimethylallyladenosine synthase (Polynucleobacter necessarius subsp. necessarius (strain STIR1)).